The following is a 1380-amino-acid chain: DNA-directed RNA polymerase subunit beta (1380 aa).

The protein belongs to the RNA polymerase beta chain family. As to quaternary structure, the RNAP catalytic core consists of 2 alpha, 1 beta, 1 beta' and 1 omega subunit. When a sigma factor is associated with the core the holoenzyme is formed, which can initiate transcription.

It carries out the reaction RNA(n) + a ribonucleoside 5'-triphosphate = RNA(n+1) + diphosphate. In terms of biological role, DNA-dependent RNA polymerase catalyzes the transcription of DNA into RNA using the four ribonucleoside triphosphates as substrates. This Alcanivorax borkumensis (strain ATCC 700651 / DSM 11573 / NCIMB 13689 / SK2) protein is DNA-directed RNA polymerase subunit beta.